The chain runs to 157 residues: UPF0225 protein PSPPH_1399 (157 aa).

The protein belongs to the UPF0225 family.

The polypeptide is UPF0225 protein PSPPH_1399 (Pseudomonas savastanoi pv. phaseolicola (strain 1448A / Race 6) (Pseudomonas syringae pv. phaseolicola (strain 1448A / Race 6))).